Consider the following 484-residue polypeptide: Protein DETOXIFICATION 33 (484 aa).

Positions 1–16 are enriched in basic and acidic residues; the sequence is MGKDKTLPLLDPREPP. The segment at 1-22 is disordered; it reads MGKDKTLPLLDPREPPELTGTK. The next 12 membrane-spanning stretches (helical) occupy residues 39-59, 81-101, 122-142, 155-175, 190-210, 218-238, 267-287, 294-314, 338-358, 380-400, 409-429, and 439-459; these read LWELAGPAIFTAISQYSLGAL, VISGLAFGVMLGMGSALETLC, VILFTTALFLLPVYIWAPPIL, AGKFALWMIPQLFAYAANFPI, WISGVVLVIHAVFSWLFILYF, AITLNTSWWLIVIGQLLYILI, ALMLCLEFWYLMVLVVVTGLL, VDAISICMNIEGWTAMISIGF, VIVVSITSTLIGIVCMIVVLA, IAVLLGFTVLLNSLQPVLSGV, LVAYVNIACYYIIGLPAGLVL, and GIWGGMVAGICLQTLILIGII.

This sequence belongs to the multi antimicrobial extrusion (MATE) (TC 2.A.66.1) family.

It is found in the membrane. The polypeptide is Protein DETOXIFICATION 33 (Arabidopsis thaliana (Mouse-ear cress)).